The chain runs to 362 residues: GTPase Obg (362 aa).

Residues methionine 1–leucine 159 enclose the Obg domain. A disordered region spans residues histidine 129 to glutamate 148. A compositionally biased stretch (polar residues) spans phenylalanine 130–lysine 141. One can recognise an OBG-type G domain in the interval alanine 160–aspartate 334. Residues glycine 166–serine 173, phenylalanine 191–histidine 195, aspartate 213–glycine 216, asparagine 284–aspartate 287, and serine 315–leucine 317 contribute to the GTP site. Mg(2+) is bound by residues serine 173 and threonine 193. A disordered region spans residues arginine 340–aspartate 362.

This sequence belongs to the TRAFAC class OBG-HflX-like GTPase superfamily. OBG GTPase family. As to quaternary structure, monomer. It depends on Mg(2+) as a cofactor.

It is found in the cytoplasm. Its function is as follows. An essential GTPase which binds GTP, GDP and possibly (p)ppGpp with moderate affinity, with high nucleotide exchange rates and a fairly low GTP hydrolysis rate. Plays a role in control of the cell cycle, stress response, ribosome biogenesis and in those bacteria that undergo differentiation, in morphogenesis control. The chain is GTPase Obg from Polynucleobacter asymbioticus (strain DSM 18221 / CIP 109841 / QLW-P1DMWA-1) (Polynucleobacter necessarius subsp. asymbioticus).